The chain runs to 239 residues: Probable 2-phosphosulfolactate phosphatase (239 aa).

This sequence belongs to the ComB family. Mg(2+) is required as a cofactor.

It carries out the reaction (2R)-O-phospho-3-sulfolactate + H2O = (2R)-3-sulfolactate + phosphate. This is Probable 2-phosphosulfolactate phosphatase from Clostridium botulinum (strain Langeland / NCTC 10281 / Type F).